Consider the following 502-residue polypeptide: Glycerol kinase (502 aa).

Residue Thr-13 participates in ADP binding. ATP-binding residues include Thr-13, Thr-14, and Ser-15. Thr-13 serves as a coordination point for sn-glycerol 3-phosphate. Arg-17 contributes to the ADP binding site. Residues Arg-83, Glu-84, Tyr-136, and Asp-246 each contribute to the sn-glycerol 3-phosphate site. Glycerol-binding residues include Arg-83, Glu-84, Tyr-136, Asp-246, and Gln-247. ADP is bound by residues Thr-268 and Gly-311. ATP is bound by residues Thr-268, Gly-311, Gln-315, and Gly-412. The ADP site is built by Gly-412 and Asn-416.

Belongs to the FGGY kinase family.

It carries out the reaction glycerol + ATP = sn-glycerol 3-phosphate + ADP + H(+). It functions in the pathway polyol metabolism; glycerol degradation via glycerol kinase pathway; sn-glycerol 3-phosphate from glycerol: step 1/1. Its activity is regulated as follows. Inhibited by fructose 1,6-bisphosphate (FBP). Functionally, key enzyme in the regulation of glycerol uptake and metabolism. Catalyzes the phosphorylation of glycerol to yield sn-glycerol 3-phosphate. The protein is Glycerol kinase of Francisella tularensis subsp. mediasiatica (strain FSC147).